Reading from the N-terminus, the 318-residue chain is NADH-ubiquinone oxidoreductase chain 1 (318 aa).

Helical transmembrane passes span 2–22, 68–88, 100–120, 146–166, 171–191, 222–242, 253–273, and 294–314; these read FMINLLLTIVPILLAVAFLTL, ITMFIIAPILALTLALTMWTP, LGVLFMLAMSSLAVYSILWSG, LAIILLSVLLLSGSFALPALI, HMWLIIPSWPLAMMWFISTLA, LFFLAEYANIIMMNIFTTILF, ELYTINFALKATLLTISFLWV, and LPLTLALCMWHVTMPIITAGI.

This sequence belongs to the complex I subunit 1 family.

The protein resides in the mitochondrion inner membrane. It carries out the reaction a ubiquinone + NADH + 5 H(+)(in) = a ubiquinol + NAD(+) + 4 H(+)(out). Its function is as follows. Core subunit of the mitochondrial membrane respiratory chain NADH dehydrogenase (Complex I) that is believed to belong to the minimal assembly required for catalysis. Complex I functions in the transfer of electrons from NADH to the respiratory chain. The immediate electron acceptor for the enzyme is believed to be ubiquinone. The protein is NADH-ubiquinone oxidoreductase chain 1 (MT-ND1) of Coelops frithii (East Asian tailless leaf-nosed bat).